The sequence spans 924 residues: Lipoxygenase 7, chloroplastic (924 aa).

Residues 1–61 (MLRPQLNPSS…GQGSSRVVVV (61 aa)) constitute a chloroplast transit peptide. Residues 88–218 (AVATIKVTVG…VGDEGTPSKR (131 aa)) form the PLAT domain. The region spanning 225 to 924 (TYLPGQTPAG…GMGIPNSTSI (700 aa)) is the Lipoxygenase domain. Positions 231–315 (TPAGLRSYRK…PKSETRKGNV (85 aa)) are disordered. 2 stretches are compositionally biased toward basic and acidic residues: residues 239-262 (RKND…RVYD) and 302-315 (SKKD…KGNV). Positions 581, 586, 773, 777, and 924 each coordinate Fe cation.

The protein belongs to the lipoxygenase family. Fe cation is required as a cofactor.

Its subcellular location is the plastid. It localises to the chloroplast. It carries out the reaction (9Z,12Z)-octadecadienoate + O2 = (13S)-hydroperoxy-(9Z,11E)-octadecadienoate. The enzyme catalyses (9Z,12Z,15Z)-octadecatrienoate + O2 = (13S)-hydroperoxy-(9Z,11E,15Z)-octadecatrienoate. The protein operates within lipid metabolism; oxylipin biosynthesis. Plant lipoxygenase may be involved in a number of diverse aspects of plant physiology including growth and development, pest resistance, and senescence or responses to wounding. This lipoxygenase introduces molecular oxygen exclusively into the C-13 position of linoleic and linolenic acids. This Oryza sativa subsp. japonica (Rice) protein is Lipoxygenase 7, chloroplastic (CM-LOX1).